Here is a 518-residue protein sequence, read N- to C-terminus: Protease Do-like 4, mitochondrial (518 aa).

The N-terminal 23 residues, 1-23 (MLFRFLQTLARFCRFLLISVLGF), are a transit peptide targeting the mitochondrion. A serine protease region spans residues 98 to 262 (ESGGSGFVIS…IPTPVIKHFL (165 aa)). Residues H116, D147, and S225 each act as charge relay system in the active site. The PDZ domain maps to 278–358 (DISYQLMENS…HFVSMKKLDE (81 aa)).

This sequence belongs to the peptidase S1C family.

It localises to the mitochondrion membrane. In terms of biological role, putative serine protease. This chain is Protease Do-like 4, mitochondrial (DEGP4), found in Arabidopsis thaliana (Mouse-ear cress).